Here is a 481-residue protein sequence, read N- to C-terminus: Argininosuccinate lyase (481 aa).

Belongs to the lyase 1 family. Argininosuccinate lyase subfamily.

The protein resides in the cytoplasm. The catalysed reaction is 2-(N(omega)-L-arginino)succinate = fumarate + L-arginine. Its pathway is amino-acid biosynthesis; L-arginine biosynthesis; L-arginine from L-ornithine and carbamoyl phosphate: step 3/3. In Methanococcus maripaludis (strain C6 / ATCC BAA-1332), this protein is Argininosuccinate lyase.